A 217-amino-acid chain; its full sequence is Probable transaldolase (217 aa).

Lysine 83 acts as the Schiff-base intermediate with substrate in catalysis.

This sequence belongs to the transaldolase family. Type 3B subfamily.

The protein resides in the cytoplasm. The enzyme catalyses D-sedoheptulose 7-phosphate + D-glyceraldehyde 3-phosphate = D-erythrose 4-phosphate + beta-D-fructose 6-phosphate. It participates in carbohydrate degradation; pentose phosphate pathway; D-glyceraldehyde 3-phosphate and beta-D-fructose 6-phosphate from D-ribose 5-phosphate and D-xylulose 5-phosphate (non-oxidative stage): step 2/3. In terms of biological role, transaldolase is important for the balance of metabolites in the pentose-phosphate pathway. The protein is Probable transaldolase of Sinorhizobium medicae (strain WSM419) (Ensifer medicae).